The sequence spans 383 residues: Acetylornithine deacetylase (383 aa).

Zn(2+) is bound at residue histidine 80. Aspartate 82 is an active-site residue. A Zn(2+)-binding site is contributed by aspartate 112. Glutamate 144 is an active-site residue. Residues glutamate 145, glutamate 169, and histidine 355 each coordinate Zn(2+).

The protein belongs to the peptidase M20A family. ArgE subfamily. As to quaternary structure, homodimer. Zn(2+) is required as a cofactor. The cofactor is Co(2+). Requires glutathione as cofactor.

The protein localises to the cytoplasm. The enzyme catalyses N(2)-acetyl-L-ornithine + H2O = L-ornithine + acetate. It functions in the pathway amino-acid biosynthesis; L-arginine biosynthesis; L-ornithine from N(2)-acetyl-L-ornithine (linear): step 1/1. Catalyzes the hydrolysis of the amide bond of N(2)-acetylated L-amino acids. Cleaves the acetyl group from N-acetyl-L-ornithine to form L-ornithine, an intermediate in L-arginine biosynthesis pathway, and a branchpoint in the synthesis of polyamines. This Shigella boydii serotype 18 (strain CDC 3083-94 / BS512) protein is Acetylornithine deacetylase.